We begin with the raw amino-acid sequence, 407 residues long: 45 kDa calcium-binding protein (407 aa).

An N-terminal signal peptide occupies residues 1-35 (MVWSWVAMASRWGPLVGLAPRCLWLLGAVLLMDAS). N40 carries N-linked (GlcNAc...) asparagine glycosylation. EF-hand domains are found at residues 98–133 (RSRR…KTAE) and 137–172 (EAME…SKGH). S99 bears the Phosphoserine mark. Ca(2+)-binding residues include D111, N113, D115, K117, E122, D150, D152, D154, H156, and E161. Residues T193 and T217 each carry the phosphothreonine modification. Positions 249–259 (GSSLAGAPGPG) are enriched in low complexity. The interval 249-282 (GSSLAGAPGPGDQRQGPGIAGKSGKVLREPQPGC) is disordered. 5 residues coordinate Ca(2+): D291, D293, D295, Q297, and E302. EF-hand domains lie at 291–313 (DQDG…TVEN), 323–358 (WVKD…MNEY), and 359–394 (NALN…FTGS). The residue at position 310 (T310) is a Phosphothreonine. Ca(2+)-binding residues include D336, N338, and D340. A Phosphothreonine modification is found at T344. 6 residues coordinate Ca(2+): E347, D372, N374, N376, H378, and E383. A necessary for intracellular retention in Golgi apparatus lumen region spans residues 354–407 (PMNEYNALNEAKQMIAVADENQNHHLEPEEVLKYSEFFTGSKLVDYARSVHEEF).

The protein belongs to the CREC family.

It localises to the golgi apparatus lumen. May regulate calcium-dependent activities in the endoplasmic reticulum lumen or post-ER compartment. The polypeptide is 45 kDa calcium-binding protein (SDF4) (Macaca fascicularis (Crab-eating macaque)).